Reading from the N-terminus, the 160-residue chain is Large ribosomal subunit protein uL18 (160 aa).

It belongs to the universal ribosomal protein uL18 family. As to quaternary structure, part of the 50S ribosomal subunit. Contacts the 5S and 23S rRNAs.

This is one of the proteins that bind and probably mediate the attachment of the 5S RNA into the large ribosomal subunit, where it forms part of the central protuberance. This Thermoplasma volcanium (strain ATCC 51530 / DSM 4299 / JCM 9571 / NBRC 15438 / GSS1) protein is Large ribosomal subunit protein uL18.